Reading from the N-terminus, the 233-residue chain is Cytidylate kinase (233 aa).

15–23 (GPSGAGKSS) contributes to the ATP binding site. The segment covering 183 to 200 (QRDRQDEGREHAPLKQAE) has biased composition (basic and acidic residues). Residues 183–203 (QRDRQDEGREHAPLKQAEDAV) are disordered.

The protein belongs to the cytidylate kinase family. Type 1 subfamily.

The protein resides in the cytoplasm. The enzyme catalyses CMP + ATP = CDP + ADP. It carries out the reaction dCMP + ATP = dCDP + ADP. This Geobacter sp. (strain M21) protein is Cytidylate kinase.